A 176-amino-acid chain; its full sequence is MDLPGPIHDFILVFLGLVLILGGLAVVLLPNPIYSAFSLGLVLVCISLLYILSNSHFLAAAQLLIYVGAINVLIIFAVMFLNGSEYYKDLNPWTVGDGVTSVVCTSLFASLITTIPDTSWYGIIWTTKSNQIIEQDLINNSQEIGIHLSTDFLIPFELISIILLVALIGAIAVARQ.

The next 5 membrane-spanning stretches (helical) occupy residues Phe10–Pro30, Pro32–Leu52, Ala61–Leu81, Val95–Ile115, and Phe152–Ala172.

This sequence belongs to the complex I subunit 6 family. In terms of assembly, NDH is composed of at least 16 different subunits, 5 of which are encoded in the nucleus.

It localises to the plastid. The protein resides in the chloroplast thylakoid membrane. It carries out the reaction a plastoquinone + NADH + (n+1) H(+)(in) = a plastoquinol + NAD(+) + n H(+)(out). The enzyme catalyses a plastoquinone + NADPH + (n+1) H(+)(in) = a plastoquinol + NADP(+) + n H(+)(out). Its function is as follows. NDH shuttles electrons from NAD(P)H:plastoquinone, via FMN and iron-sulfur (Fe-S) centers, to quinones in the photosynthetic chain and possibly in a chloroplast respiratory chain. The immediate electron acceptor for the enzyme in this species is believed to be plastoquinone. Couples the redox reaction to proton translocation, and thus conserves the redox energy in a proton gradient. The sequence is that of NAD(P)H-quinone oxidoreductase subunit 6, chloroplastic (ndhG) from Trachelium caeruleum (Blue throatwort).